Consider the following 338-residue polypeptide: Glyceraldehyde-3-phosphate dehydrogenase (338 aa).

NAD(+) is bound by residues arginine 13, isoleucine 14, aspartate 35, arginine 80, and serine 123. D-glyceraldehyde 3-phosphate contacts are provided by serine 152, cysteine 153, threonine 154, threonine 183, arginine 198, threonine 212, glycine 213, and arginine 235. Residue cysteine 153 is the Nucleophile of the active site. Asparagine 317 serves as a coordination point for NAD(+).

This sequence belongs to the glyceraldehyde-3-phosphate dehydrogenase family. In terms of assembly, homotetramer.

It localises to the tegument membrane. The catalysed reaction is D-glyceraldehyde 3-phosphate + phosphate + NAD(+) = (2R)-3-phospho-glyceroyl phosphate + NADH + H(+). The protein operates within carbohydrate degradation; glycolysis; pyruvate from D-glyceraldehyde 3-phosphate: step 1/5. This antigen is associated with human resistance to schistosomiasis. The polypeptide is Glyceraldehyde-3-phosphate dehydrogenase (Schistosoma mansoni (Blood fluke)).